Consider the following 210-residue polypeptide: ATP-dependent dethiobiotin synthetase BioD (210 aa).

ATP is bound at residue 12 to 17; it reads NVGKTH. T16 contacts Mg(2+). Residue K37 is part of the active site. T41 is a binding site for substrate. Position 114 (E114) interacts with Mg(2+). 114-117 provides a ligand contact to ATP; it reads EGAG.

It belongs to the dethiobiotin synthetase family. In terms of assembly, homodimer. The cofactor is Mg(2+).

Its subcellular location is the cytoplasm. The enzyme catalyses (7R,8S)-7,8-diammoniononanoate + CO2 + ATP = (4R,5S)-dethiobiotin + ADP + phosphate + 3 H(+). Its pathway is cofactor biosynthesis; biotin biosynthesis; biotin from 7,8-diaminononanoate: step 1/2. Functionally, catalyzes a mechanistically unusual reaction, the ATP-dependent insertion of CO2 between the N7 and N8 nitrogen atoms of 7,8-diaminopelargonic acid (DAPA, also called 7,8-diammoniononanoate) to form a ureido ring. The sequence is that of ATP-dependent dethiobiotin synthetase BioD from Sulfurovum sp. (strain NBC37-1).